The primary structure comprises 319 residues: Beta-ketoacyl-[acyl-carrier-protein] synthase III (319 aa).

Residues Cys110 and His246 contribute to the active site. The segment at 247-251 (QANYR) is ACP-binding. Asn276 is an active-site residue.

The protein belongs to the thiolase-like superfamily. FabH family. As to quaternary structure, homodimer.

The protein localises to the cytoplasm. It carries out the reaction malonyl-[ACP] + acetyl-CoA + H(+) = 3-oxobutanoyl-[ACP] + CO2 + CoA. It participates in lipid metabolism; fatty acid biosynthesis. Catalyzes the condensation reaction of fatty acid synthesis by the addition to an acyl acceptor of two carbons from malonyl-ACP. Catalyzes the first condensation reaction which initiates fatty acid synthesis and may therefore play a role in governing the total rate of fatty acid production. Possesses both acetoacetyl-ACP synthase and acetyl transacylase activities. Its substrate specificity determines the biosynthesis of branched-chain and/or straight-chain of fatty acids. The protein is Beta-ketoacyl-[acyl-carrier-protein] synthase III of Lactobacillus delbrueckii subsp. bulgaricus (strain ATCC BAA-365 / Lb-18).